A 372-amino-acid polypeptide reads, in one-letter code: Germination protease (372 aa).

Positions 1 to 15 (MVKELNLEQYNVRTD) are excised as a propeptide.

This sequence belongs to the peptidase A25 family. Homotetramer. Post-translationally, autoproteolytically processed. The inactive tetrameric zymogen termed p46 autoprocesses to a smaller form termed p41, which is active only during spore germination.

The catalysed reaction is Endopeptidase action with P4 Glu or Asp, P1 preferably Glu &gt; Asp, P1' hydrophobic and P2' Ala.. Functionally, initiates the rapid degradation of small, acid-soluble proteins during spore germination. This chain is Germination protease, found in Halalkalibacterium halodurans (strain ATCC BAA-125 / DSM 18197 / FERM 7344 / JCM 9153 / C-125) (Bacillus halodurans).